Reading from the N-terminus, the 190-residue chain is DNA dC-&gt;dU-editing enzyme APOBEC-3C (190 aa).

The region spanning 29–138 is the CMP/dCMP-type deaminase domain; that stretch reads DRNETWLCFT…PCYQEGLRSL (110 aa). The interval 40–86 is (Microbial infection) Required for interaction with human foamy virus protein Bet; the sequence is EGIKRRSVVSWKTGVFRNQVDSETHCHAERCFLSWFCDDILSPNTKY. H66 contributes to the Zn(2+) binding site. The active-site Proton donor is the E68. Residues C97 and C100 each contribute to the Zn(2+) site.

This sequence belongs to the cytidine and deoxycytidylate deaminase family. In terms of assembly, homodimer. Interacts with TRIB3. Interacts with AGO2. (Microbial infection) Interacts with human foamy virus protein Bet; this interaction does not induce APOBEC3C degradation but prevents its dimerization and incorporation into the virion by binding of Bet close to or within the APOBEC3C dimerization site. As to quaternary structure, (Microbial infection) Interacts with HIV-1 Vif. Zn(2+) serves as cofactor. As to expression, expressed in spleen, testes, peripherical blood lymphocytes, heart, thymus, prostate and ovary.

The protein localises to the nucleus. It localises to the cytoplasm. The catalysed reaction is a 2'-deoxycytidine in single-stranded DNA + H2O + H(+) = a 2'-deoxyuridine in single-stranded DNA + NH4(+). Its activity is regulated as follows. (Microbial infection) Antiviral activity is neutralized by the HIV-1 virion infectivity factor (Vif), that prevents its incorporation into progeny HIV-1 virions by both inhibiting its translation and/or by inducing its ubiquitination and subsequent degradation by the 26S proteasome. Its function is as follows. DNA deaminase (cytidine deaminase) which acts as an inhibitor of retrovirus replication and retrotransposon mobility via deaminase-dependent and -independent mechanisms. After the penetration of retroviral nucleocapsids into target cells of infection and the initiation of reverse transcription, it can induce the conversion of cytosine to uracil in the minus-sense single-strand viral DNA, leading to G-to-A hypermutations in the subsequent plus-strand viral DNA. The resultant detrimental levels of mutations in the proviral genome, along with a deamination-independent mechanism that works prior to the proviral integration, together exert efficient antiretroviral effects in infected target cells. Selectively targets single-stranded DNA and does not deaminate double-stranded DNA or single- or double-stranded RNA. Exhibits antiviral activity against simian immunodeficiency virus (SIV), hepatitis B virus (HBV), herpes simplex virus 1 (HHV-1) and Epstein-Barr virus (EBV) and may inhibit the mobility of LTR and non-LTR retrotransposons. May also play a role in the epigenetic regulation of gene expression through the process of active DNA demethylation. This Homo sapiens (Human) protein is DNA dC-&gt;dU-editing enzyme APOBEC-3C (APOBEC3C).